The chain runs to 508 residues: Purine-cytosine permease fcyB (508 aa).

Residues 1–72 (MAGAFDFDLE…AEQTDTSVFN (72 aa)) lie on the Cytoplasmic side of the membrane. Residues 73-93 (IGSMWLAANMVVSSFAIGVLG) traverse the membrane as a helical segment. Topologically, residues 94 to 104 (KSVYSLGFVDA) are extracellular. Residues 105-125 (ILTVLFFNLLGIMTVCFFSCF) form a helical membrane-spanning segment. Residues 126–147 (GPFGLRQMVFSRLWFGWYVTKG) lie on the Cytoplasmic side of the membrane. Residues 148-168 (FAVLNILACLGWSAANAIVGA) form a helical membrane-spanning segment. Over 169-177 (QMLHAVNSD) the chain is Extracellular. Residues 178 to 198 (VPGFAAILIISICTLLVTFAG) traverse the membrane as a helical segment. The Cytoplasmic portion of the chain corresponds to 199-200 (YK). Residues 201–221 (VVHLYEYWSWIPTFIVFMIIL) traverse the membrane as a helical segment. The Extracellular segment spans residues 222–243 (GTFAHSGDFQNIPMGVGTSEMG). Residues 244–264 (SVLSFGSAVYGFATGWTSYAA) form a helical membrane-spanning segment. Topologically, residues 265-278 (DYTVYQPANRSKRK) are cytoplasmic. Residues 279–299 (IFLSTWLGLIVPLLFVEMLGV) form a helical membrane-spanning segment. Residues 300–323 (AVMTATDIKGSKYDVGYATSGNGG) are Extracellular-facing. A helical transmembrane segment spans residues 324 to 344 (LIAAVLQPLGGFGDFCLVILA). At 345–374 (LSIVANNCPNFYSVALTVQVLSRYAQRVPR) the chain is on the cytoplasmic side. Residues 375–395 (FIWTLFGTGVSIAIAIPGYSH) form a helical membrane-spanning segment. Residues 396–404 (FETVLENFM) are Extracellular-facing. Residues 405–425 (NFIAYWLAIYSAIAIMDHFVF) form a helical membrane-spanning segment. The Cytoplasmic portion of the chain corresponds to 426–442 (KRGFSGYVVENFDKREK). The chain crosses the membrane as a helical span at residues 443–463 (LPVGIAATIAFGFGVAGMITG). Residues 464-477 (MSQPWYVGPIARHA) are Extracellular-facing. The chain crosses the membrane as a helical span at residues 478–498 (AGGDVGFELGFAFAAFSYLCL). The Cytoplasmic segment spans residues 499–508 (RPFEIKFFGR).

It belongs to the purine-cytosine permease (2.A.39) family.

Its subcellular location is the cell membrane. Functionally, this permease has a broad specificity towards purines, and also transports cytosine, but neither uracil nor thymine. Contributes very little in purine uptake. Its major role may be the uptake of cytosine. This Emericella nidulans (strain FGSC A4 / ATCC 38163 / CBS 112.46 / NRRL 194 / M139) (Aspergillus nidulans) protein is Purine-cytosine permease fcyB (fcyB).